Here is a 456-residue protein sequence, read N- to C-terminus: Probable tRNA(Ile)-lysidine synthase (456 aa).

An ATP-binding site is contributed by 30-35 (SGGVDS).

This sequence belongs to the tRNA(Ile)-lysidine synthase family.

Its subcellular location is the cytoplasm. It carries out the reaction cytidine(34) in tRNA(Ile2) + L-lysine + ATP = lysidine(34) in tRNA(Ile2) + AMP + diphosphate + H(+). Its function is as follows. Ligates lysine onto the cytidine present at position 34 of the AUA codon-specific tRNA(Ile) that contains the anticodon CAU, in an ATP-dependent manner. Cytidine is converted to lysidine, thus changing the amino acid specificity of the tRNA from methionine to isoleucine. The protein is Probable tRNA(Ile)-lysidine synthase of Schizosaccharomyces pombe (strain 972 / ATCC 24843) (Fission yeast).